The following is a 125-amino-acid chain: Flagellar protein FliT (125 aa).

Positions 1–50 are required for homodimerization; sequence MDNKMDLLSAYQRILSLSEQMLNLAKNEKWDELVDMEITYLKAVEVISHS. The tract at residues 60 to 98 is fliD binding; that stretch reads LQQKMTNILQIILDNENEIKKLLQKRLDELSKLIKQASQ.

It belongs to the FliT family. In terms of assembly, homodimer. Interacts with FliD and FlhC.

Its subcellular location is the cytoplasm. It localises to the cytosol. In terms of biological role, dual-function protein that regulates the transcription of class 2 flagellar operons and that also acts as an export chaperone for the filament-capping protein FliD. As a transcriptional regulator, acts as an anti-FlhDC factor; it directly binds FlhC, thus inhibiting the binding of the FlhC/FlhD complex to class 2 promoters, resulting in decreased expression of class 2 flagellar operons. As a chaperone, effects FliD transition to the membrane by preventing its premature polymerization, and by directing it to the export apparatus. This Photorhabdus laumondii subsp. laumondii (strain DSM 15139 / CIP 105565 / TT01) (Photorhabdus luminescens subsp. laumondii) protein is Flagellar protein FliT.